A 376-amino-acid chain; its full sequence is Phytanoyl-CoA hydroxylase-interacting protein-like (376 aa).

One can recognise a Fibronectin type-III domain in the interval 52–161 (VPHNIKISNI…EIIEFCTADY (110 aa)).

This sequence belongs to the PHYHIP family.

May play a role in the development of the central system. This Xenopus tropicalis (Western clawed frog) protein is Phytanoyl-CoA hydroxylase-interacting protein-like (phyhipl).